The primary structure comprises 162 residues: NADH-quinone oxidoreductase subunit I (162 aa).

4Fe-4S ferredoxin-type domains follow at residues 53–83 and 93–122; these read LRRY…IESE and TRYD…EGPN. Positions 63, 66, 69, 73, 102, 105, 108, and 112 each coordinate [4Fe-4S] cluster.

The protein belongs to the complex I 23 kDa subunit family. In terms of assembly, NDH-1 is composed of 14 different subunits. Subunits NuoA, H, J, K, L, M, N constitute the membrane sector of the complex. [4Fe-4S] cluster is required as a cofactor.

Its subcellular location is the cell inner membrane. It catalyses the reaction a quinone + NADH + 5 H(+)(in) = a quinol + NAD(+) + 4 H(+)(out). NDH-1 shuttles electrons from NADH, via FMN and iron-sulfur (Fe-S) centers, to quinones in the respiratory chain. The immediate electron acceptor for the enzyme in this species is believed to be ubiquinone. Couples the redox reaction to proton translocation (for every two electrons transferred, four hydrogen ions are translocated across the cytoplasmic membrane), and thus conserves the redox energy in a proton gradient. This is NADH-quinone oxidoreductase subunit I from Erythrobacter litoralis (strain HTCC2594).